A 344-amino-acid polypeptide reads, in one-letter code: uncharacterized protein (344 aa).

It belongs to the glycosyltransferase 28 family.

This is an uncharacterized protein from Methanopyrus kandleri (strain AV19 / DSM 6324 / JCM 9639 / NBRC 100938).